Consider the following 238-residue polypeptide: 7-cyano-7-deazaguanine synthase (238 aa).

10–20 is a binding site for ATP; that stretch reads LSGGLDSSTVL. Positions 190, 198, 201, and 204 each coordinate Zn(2+).

It belongs to the QueC family. Zn(2+) is required as a cofactor.

It catalyses the reaction 7-carboxy-7-deazaguanine + NH4(+) + ATP = 7-cyano-7-deazaguanine + ADP + phosphate + H2O + H(+). It participates in purine metabolism; 7-cyano-7-deazaguanine biosynthesis. Its function is as follows. Catalyzes the ATP-dependent conversion of 7-carboxy-7-deazaguanine (CDG) to 7-cyano-7-deazaguanine (preQ(0)). The chain is 7-cyano-7-deazaguanine synthase from Thermoplasma acidophilum (strain ATCC 25905 / DSM 1728 / JCM 9062 / NBRC 15155 / AMRC-C165).